The primary structure comprises 139 residues: Putative lipoprotein LpqV (139 aa).

The first 25 residues, 1–25 (MRPSRYAPLLCAMVLALAWLSAVAG), serve as a signal peptide directing secretion. Cysteine 26 carries N-palmitoyl cysteine lipidation. A lipid anchor (S-diacylglycerol cysteine) is attached at cysteine 26.

Its subcellular location is the cell membrane. This Mycobacterium bovis (strain ATCC BAA-935 / AF2122/97) protein is Putative lipoprotein LpqV (lpqV).